The primary structure comprises 184 residues: ATP synthase subunit b, chloroplastic (184 aa).

Residues 27-49 (FATNPINLSVVLGVLIFFGKGVL) traverse the membrane as a helical segment.

The protein belongs to the ATPase B chain family. As to quaternary structure, F-type ATPases have 2 components, F(1) - the catalytic core - and F(0) - the membrane proton channel. F(1) has five subunits: alpha(3), beta(3), gamma(1), delta(1), epsilon(1). F(0) has four main subunits: a(1), b(1), b'(1) and c(10-14). The alpha and beta chains form an alternating ring which encloses part of the gamma chain. F(1) is attached to F(0) by a central stalk formed by the gamma and epsilon chains, while a peripheral stalk is formed by the delta, b and b' chains.

It is found in the plastid. Its subcellular location is the chloroplast thylakoid membrane. Its function is as follows. F(1)F(0) ATP synthase produces ATP from ADP in the presence of a proton or sodium gradient. F-type ATPases consist of two structural domains, F(1) containing the extramembraneous catalytic core and F(0) containing the membrane proton channel, linked together by a central stalk and a peripheral stalk. During catalysis, ATP synthesis in the catalytic domain of F(1) is coupled via a rotary mechanism of the central stalk subunits to proton translocation. Component of the F(0) channel, it forms part of the peripheral stalk, linking F(1) to F(0). This is ATP synthase subunit b, chloroplastic from Ipomoea purpurea (Common morning glory).